Here is a 337-residue protein sequence, read N- to C-terminus: GTP 3',8-cyclase (337 aa).

The Radical SAM core domain maps to 17-242; that stretch reads TFQREYYYLR…RQKDRTDGPA (226 aa). Arg26 lines the GTP pocket. Cys33 and Cys37 together coordinate [4Fe-4S] cluster. Tyr39 serves as a coordination point for S-adenosyl-L-methionine. Position 40 (Cys40) interacts with [4Fe-4S] cluster. Arg76 provides a ligand contact to GTP. An S-adenosyl-L-methionine-binding site is contributed by Gly80. Thr107 contributes to the GTP binding site. Ser131 contacts S-adenosyl-L-methionine. Residue Lys168 coordinates GTP. Met202 serves as a coordination point for S-adenosyl-L-methionine. Residues Cys265 and Cys268 each contribute to the [4Fe-4S] cluster site. 270-272 provides a ligand contact to GTP; it reads RLR. Cys282 lines the [4Fe-4S] cluster pocket.

The protein belongs to the radical SAM superfamily. MoaA family. In terms of assembly, monomer and homodimer. [4Fe-4S] cluster is required as a cofactor.

It catalyses the reaction GTP + AH2 + S-adenosyl-L-methionine = (8S)-3',8-cyclo-7,8-dihydroguanosine 5'-triphosphate + 5'-deoxyadenosine + L-methionine + A + H(+). The protein operates within cofactor biosynthesis; molybdopterin biosynthesis. Its function is as follows. Catalyzes the cyclization of GTP to (8S)-3',8-cyclo-7,8-dihydroguanosine 5'-triphosphate. The sequence is that of GTP 3',8-cyclase from Mannheimia succiniciproducens (strain KCTC 0769BP / MBEL55E).